Here is a 626-residue protein sequence, read N- to C-terminus: Mitogen-activated protein kinase kinase kinase 3 (626 aa).

The region spanning 44–123 is the PB1 domain; that stretch reads DVRIKFEHNG…KSLRILLLSQ (80 aa). Disordered regions lie at residues 125–184 and 218–273; these read RNHT…YVPE and SSAE…VKGG. Polar residues-rich tracts occupy residues 128-137, 144-155, 165-174, and 219-247; these read TSSSPHSGVS, PSQSAGDINTIY, LSVSSQNPGR, and SAEN…QMSR. Ser-147 and Ser-166 each carry phosphoserine. 2 positions are modified to phosphoserine: Ser-250 and Ser-312. Over residues 250-270 the composition is skewed to basic and acidic residues; the sequence is SFPDNRKECSDRETQLYDKGV. Ser-337 carries the phosphoserine; by SGK1 modification. A Phosphoserine modification is found at Ser-340. Residues 362-622 enclose the Protein kinase domain; sequence WRRGKLLGQG…AEELLTHHFA (261 aa). Residues 368-376 and Lys-391 each bind ATP; that span reads LGQGAFGRV. Asp-489 serves as the catalytic Proton acceptor.

This sequence belongs to the protein kinase superfamily. STE Ser/Thr protein kinase family. MAP kinase kinase kinase subfamily. In terms of assembly, binds both upstream activators and downstream substrates in multimolecular complexes. Part of a complex with MAP2K3, RAC1 and CCM2. Interacts with MAP2K5 and SPAG9. Mg(2+) is required as a cofactor. Post-translationally, phosphorylation at Ser-166 and Ser-337 by SGK1 inhibits its activity.

The catalysed reaction is L-seryl-[protein] + ATP = O-phospho-L-seryl-[protein] + ADP + H(+). The enzyme catalyses L-threonyl-[protein] + ATP = O-phospho-L-threonyl-[protein] + ADP + H(+). Activated by phosphorylation on Thr-530. Functionally, component of a protein kinase signal transduction cascade. Mediates activation of the NF-kappa-B, AP1 and DDIT3 transcriptional regulators. In Mus musculus (Mouse), this protein is Mitogen-activated protein kinase kinase kinase 3 (Map3k3).